Reading from the N-terminus, the 244-residue chain is Phosphoadenosine 5'-phosphosulfate reductase (244 aa).

Cys239 serves as the catalytic Nucleophile; cysteine thiosulfonate intermediate.

This sequence belongs to the PAPS reductase family. CysH subfamily.

The protein localises to the cytoplasm. It carries out the reaction [thioredoxin]-disulfide + sulfite + adenosine 3',5'-bisphosphate + 2 H(+) = [thioredoxin]-dithiol + 3'-phosphoadenylyl sulfate. Its pathway is sulfur metabolism; hydrogen sulfide biosynthesis; sulfite from sulfate: step 3/3. Its function is as follows. Catalyzes the formation of sulfite from phosphoadenosine 5'-phosphosulfate (PAPS) using thioredoxin as an electron donor. This Salmonella heidelberg (strain SL476) protein is Phosphoadenosine 5'-phosphosulfate reductase.